The chain runs to 93 residues: uncharacterized protein (93 aa).

In terms of domain architecture, TRAM spans 24–85; that stretch reads QLQVGDTLKL…IQTQVGRLFF (62 aa).

The protein belongs to the ycf81 family.

This is an uncharacterized protein from Thermus thermophilus.